A 323-amino-acid polypeptide reads, in one-letter code: Octaprenyl diphosphate synthase (323 aa).

Isopentenyl diphosphate contacts are provided by Lys45, Arg48, and His77. Mg(2+)-binding residues include Asp84 and Asp88. Arg93 contacts an all-trans-polyprenyl diphosphate. Arg94 is an isopentenyl diphosphate binding site. Lys170, Thr171, and Gln208 together coordinate an all-trans-polyprenyl diphosphate.

Belongs to the FPP/GGPP synthase family. The cofactor is Mg(2+).

The enzyme catalyses 5 isopentenyl diphosphate + (2E,6E)-farnesyl diphosphate = all-trans-octaprenyl diphosphate + 5 diphosphate. Its function is as follows. Supplies octaprenyl diphosphate, the precursor for the side chain of the isoprenoid quinones ubiquinone and menaquinone. The polypeptide is Octaprenyl diphosphate synthase (ispB) (Escherichia coli (strain K12)).